The sequence spans 316 residues: Transaldolase (316 aa).

K131 acts as the Schiff-base intermediate with substrate in catalysis.

Belongs to the transaldolase family. Type 1 subfamily. Homodimer.

It is found in the cytoplasm. It carries out the reaction D-sedoheptulose 7-phosphate + D-glyceraldehyde 3-phosphate = D-erythrose 4-phosphate + beta-D-fructose 6-phosphate. Its pathway is carbohydrate degradation; pentose phosphate pathway; D-glyceraldehyde 3-phosphate and beta-D-fructose 6-phosphate from D-ribose 5-phosphate and D-xylulose 5-phosphate (non-oxidative stage): step 2/3. Its function is as follows. Transaldolase is important for the balance of metabolites in the pentose-phosphate pathway. In Buchnera aphidicola subsp. Acyrthosiphon pisum (strain 5A), this protein is Transaldolase.